Here is a 449-residue protein sequence, read N- to C-terminus: Putative tartrate transporter (449 aa).

11 consecutive transmembrane segments (helical) span residues 34–54 (IVPF…NIGF), 64–84 (GFSS…YFLF), 99–119 (IWIA…AFVQ), 130–150 (LLGV…SFWF), 156–176 (AAVT…GSPI), 194–214 (WMFL…LFFL), 259–279 (VIAL…LGIW), 292–312 (IEVG…MVLW), 336–356 (GLAF…LTIV), 367–387 (LWSM…IATI), and 414–434 (GGLY…LILA).

It belongs to the major facilitator superfamily. Phthalate permease family.

It is found in the cell membrane. In terms of biological role, component of the tartrate utilization system and may allow entry of tartrate and tartrate dehydrogenase. This Agrobacterium vitis (Rhizobium vitis) protein is Putative tartrate transporter (ttuB).